We begin with the raw amino-acid sequence, 336 residues long: Probable allantoicase (336 aa).

This sequence belongs to the allantoicase family.

It carries out the reaction allantoate + H2O = (S)-ureidoglycolate + urea. The protein operates within nitrogen metabolism; (S)-allantoin degradation; (S)-ureidoglycolate from allantoate (aminidohydrolase route): step 1/1. This is Probable allantoicase from Acinetobacter baumannii (strain AYE).